Here is a 195-residue protein sequence, read N- to C-terminus: Segregation and condensation protein B (195 aa).

This sequence belongs to the ScpB family. As to quaternary structure, homodimer. Homodimerization may be required to stabilize the binding of ScpA to the Smc head domains. Component of a cohesin-like complex composed of ScpA, ScpB and the Smc homodimer, in which ScpA and ScpB bind to the head domain of Smc. The presence of the three proteins is required for the association of the complex with DNA.

Its subcellular location is the cytoplasm. In terms of biological role, participates in chromosomal partition during cell division. May act via the formation of a condensin-like complex containing Smc and ScpA that pull DNA away from mid-cell into both cell halves. The protein is Segregation and condensation protein B of Clostridium perfringens (strain ATCC 13124 / DSM 756 / JCM 1290 / NCIMB 6125 / NCTC 8237 / Type A).